A 213-amino-acid polypeptide reads, in one-letter code: Phosphoribosyl-dephospho-CoA transferase (213 aa).

Residues Asp-135 and Asp-137 contribute to the active site.

It belongs to the MdcG family.

The catalysed reaction is apo-[malonate decarboxylase ACP] + 2'-(5''-triphospho-alpha-D-ribosyl)-3'-dephospho-CoA = holo-[malonate decarboxylase ACP] + diphosphate. Transfers 2'-(5-triphosphoribosyl)-3'-dephosphocoenzyme-A to the apo-[acyl-carrier-protein] of the malonate decarboxylase to yield holo-[acyl-carrier-protein]. The polypeptide is Phosphoribosyl-dephospho-CoA transferase (Xanthomonas axonopodis pv. citri (strain 306)).